A 494-amino-acid polypeptide reads, in one-letter code: Cytochrome P450 2A6 (494 aa).

Residues Phe-107 and Asn-297 each contribute to the substrate site. Cys-439 provides a ligand contact to heme.

It belongs to the cytochrome P450 family. Heme serves as cofactor. As to expression, liver.

Its subcellular location is the endoplasmic reticulum membrane. It is found in the microsome membrane. It catalyses the reaction 1,4-cineole + reduced [NADPH--hemoprotein reductase] + O2 = 2-exo-hydroxy-1,4-cineole + oxidized [NADPH--hemoprotein reductase] + H2O + H(+). Its function is as follows. Exhibits a high coumarin 7-hydroxylase activity. Can act in the hydroxylation of the anti-cancer drugs cyclophosphamide and ifosphamide. Competent in the metabolic activation of aflatoxin B1. Constitutes the major nicotine C-oxidase. Acts as a 1,4-cineole 2-exo-monooxygenase. Possesses low phenacetin O-deethylation activity. The polypeptide is Cytochrome P450 2A6 (CYP2A6) (Homo sapiens (Human)).